Reading from the N-terminus, the 822-residue chain is AP-1 complex subunit gamma-1 (822 aa).

Residues Glu597–Leu628 are disordered. Residues Ala702–Pro817 enclose the GAE domain.

Belongs to the adaptor complexes large subunit family. Adaptor protein complex 1 (AP-1) is a heterotetramer composed of two large adaptins (gamma-type subunit AP1G1 and beta-type subunit AP1B1), a medium adaptin (mu-type subunit AP1M1 or AP1M2) and a small adaptin (sigma-type subunit AP1S1 or AP1S2 or AP1S3). Interacts (via GAE domain) with RABEP1. Interacts with EPS15. Interacts with SYNRG/gamma-synergin. Interacts (via GAE domain) with AP1AR (via coiled-coil domain). Interacts with CLN3 (via dileucine motif); this interaction facilitates lysosomal targeting. Interacts (via GAE domain) with AFTPH/aftiphilin; the interaction is required to recruit AFTPH/aftiphilin to the perinuclear region of the cell.

The protein resides in the golgi apparatus. Its subcellular location is the cytoplasmic vesicle. It is found in the clathrin-coated vesicle membrane. The protein localises to the cytoplasm. It localises to the perinuclear region. The protein resides in the clathrin-coated vesicle. Its subcellular location is the membrane. It is found in the clathrin-coated pit. Subunit of clathrin-associated adaptor protein complex 1 that plays a role in protein sorting in the late-Golgi/trans-Golgi network (TGN) and/or endosomes. The AP complexes mediate both the recruitment of clathrin to membranes and the recognition of sorting signals within the cytosolic tails of transmembrane cargo molecules. In association with AFTPH/aftiphilin in the aftiphilin/p200/gamma-synergin complex, involved in the trafficking of transferrin from early to recycling endosomes, and the membrane trafficking of furin and the lysosomal enzyme cathepsin D between the trans-Golgi network (TGN) and endosomes. This is AP-1 complex subunit gamma-1 (AP1G1) from Pongo abelii (Sumatran orangutan).